Here is a 420-residue protein sequence, read N- to C-terminus: MSNTQKQLALAKAAKKSVNTADTEEKNRALLAMADSLEAAAADILAANRQDLEAAAGKIPESMTDRLLLDGKRICAMADGIRAVAALPDPVGEILETSTLPNGLEIVKKRVAMGVIGIIYESRPNVTSDAAALALKSGSAVVLRSGKDAFQSARAIVAALKTGLAQTRIDPDALQLIEDTGREGSYEMMRAKDYLDLLIPRGGAGLIRAVVENAVVPVIETGTGIVHIYVDKDADLEKAIRIVRNAKTSRPSVCNSMEVLLVHEDIAADFLPKLERLLVRDRIEAGLPPVRFRLDPQAARHIGGEAAGADDFDTEFLDYILAVKTVASVEEAVGHIEAHGTHHSDGIVTENRHAADYFTTHIDSAAVYVNASTRFTDGGEFGLGCEMGISTQKLHARGPMGLKELTSYKYIVQGTGQVRE.

The protein belongs to the gamma-glutamyl phosphate reductase family.

The protein resides in the cytoplasm. It catalyses the reaction L-glutamate 5-semialdehyde + phosphate + NADP(+) = L-glutamyl 5-phosphate + NADPH + H(+). The protein operates within amino-acid biosynthesis; L-proline biosynthesis; L-glutamate 5-semialdehyde from L-glutamate: step 2/2. In terms of biological role, catalyzes the NADPH-dependent reduction of L-glutamate 5-phosphate into L-glutamate 5-semialdehyde and phosphate. The product spontaneously undergoes cyclization to form 1-pyrroline-5-carboxylate. The protein is Gamma-glutamyl phosphate reductase of Neisseria meningitidis serogroup C / serotype 2a (strain ATCC 700532 / DSM 15464 / FAM18).